The chain runs to 377 residues: 1,3,6,8-tetrahydroxynaphthalene synthase (377 aa).

The active site involves cysteine 164.

It belongs to the thiolase-like superfamily. Chalcone/stilbene synthases family. Homodimer.

The catalysed reaction is 5 malonyl-CoA + 5 H(+) = naphthalene-1,3,6,8-tetrol + 5 CO2 + 5 CoA + H2O. It functions in the pathway pigment biosynthesis; melanin biosynthesis. Functionally, involved in the biosynthesis of melanin but also various secondary metabolites containing a naphthoquinone ring. Catalyzes the iterative condensation of five CoA-linked malonyl units to form a pentaketide intermediate. THNS subsequently catalyzes the dual intramolecular Claisen and aldol condensations of this linear intermediate to produce the fused ring of 1,3,6,8-tetrahydroxynaphthalene (THN). In Streptomyces peucetius subsp. caesius, this protein is 1,3,6,8-tetrahydroxynaphthalene synthase.